Here is a 776-residue protein sequence, read N- to C-terminus: Mitochondrial intermediate peptidase (776 aa).

Residues 1 to 28 (MRRFSTLSRRLQRVVPASSASTANTSPS) constitute a mitochondrion transit peptide. His561 is a binding site for Zn(2+). Residue Glu562 is part of the active site. His565 and His568 together coordinate Zn(2+).

The protein belongs to the peptidase M3 family. The cofactor is Zn(2+).

It localises to the mitochondrion matrix. The catalysed reaction is Release of an N-terminal octapeptide as second stage of processing of some proteins imported into the mitochondrion.. Cleaves proteins, imported into the mitochondrion, to their mature size. While most mitochondrial precursor proteins are processed to the mature form in one step by mitochondrial processing peptidase (MPP), the sequential cleavage by MIP of an octapeptide after initial processing by MPP is a required step for a subgroup of nuclear-encoded precursor proteins destined for the matrix or the inner membrane. This chain is Mitochondrial intermediate peptidase (OCT1), found in Yarrowia lipolytica (strain CLIB 122 / E 150) (Yeast).